Here is a 438-residue protein sequence, read N- to C-terminus: uncharacterized protein (438 aa).

The FAD-binding PCMH-type domain occupies 23–193 (IHAKPPVVVV…VNATIRLTAA (171 aa)). FAD contacts are provided by residues 55-59 (VRGSG), 60-61 (HS), glutamine 65, aspartate 117, threonine 122, 128-132 (SVGGF), isoleucine 183, tyrosine 393, and 430-433 (APGY). At histidine 60 the chain carries Pros-8alpha-FAD histidine.

It belongs to the oxygen-dependent FAD-linked oxidoreductase family. FAD is required as a cofactor.

Its function is as follows. The FAS-operon encodes genes involved in cytokinin production and in host plant fasciation (leafy gall). This is an uncharacterized protein from Rhodococcoides fascians (Rhodococcus fascians).